The chain runs to 68 residues: DNA gyrase inhibitor YacG (68 aa).

Residues C12, C15, C30, and C34 each contribute to the Zn(2+) site. The interval K48–D68 is disordered.

Belongs to the DNA gyrase inhibitor YacG family. Interacts with GyrB. Requires Zn(2+) as cofactor.

Functionally, inhibits all the catalytic activities of DNA gyrase by preventing its interaction with DNA. Acts by binding directly to the C-terminal domain of GyrB, which probably disrupts DNA binding by the gyrase. This is DNA gyrase inhibitor YacG from Acinetobacter baylyi (strain ATCC 33305 / BD413 / ADP1).